A 188-amino-acid chain; its full sequence is FUN14 domain-containing protein 1B (188 aa).

The chain crosses the membrane as a helical span at residues 21–41 (VVNIDGNIFSIYVCFFVCFFF). The short motif at 52–55 (YEVL) is the YXXL element. 3 helical membrane-spanning segments follow: residues 82 to 102 (YSVA…GFLF), 109 to 129 (AATA…GGYI), and 167 to 187 (FFKK…IGLA).

This sequence belongs to the FUN14 family.

Its subcellular location is the mitochondrion outer membrane. Acts as an activator of hypoxia-induced mitophagy, an important mechanism for mitochondrial quality control. The protein is FUN14 domain-containing protein 1B (fundc1-b) of Xenopus laevis (African clawed frog).